A 102-amino-acid polypeptide reads, in one-letter code: NADH-quinone oxidoreductase subunit K (102 aa).

Transmembrane regions (helical) follow at residues 5 to 25 (LGHF…GIFL), 31 to 51 (IVLL…FVAF), and 62 to 82 (IFVF…LAIL).

This sequence belongs to the complex I subunit 4L family. As to quaternary structure, NDH-1 is composed of 14 different subunits. Subunits NuoA, H, J, K, L, M, N constitute the membrane sector of the complex.

It localises to the cell inner membrane. The enzyme catalyses a quinone + NADH + 5 H(+)(in) = a quinol + NAD(+) + 4 H(+)(out). Functionally, NDH-1 shuttles electrons from NADH, via FMN and iron-sulfur (Fe-S) centers, to quinones in the respiratory chain. The immediate electron acceptor for the enzyme in this species is believed to be ubiquinone. Couples the redox reaction to proton translocation (for every two electrons transferred, four hydrogen ions are translocated across the cytoplasmic membrane), and thus conserves the redox energy in a proton gradient. In Albidiferax ferrireducens (strain ATCC BAA-621 / DSM 15236 / T118) (Rhodoferax ferrireducens), this protein is NADH-quinone oxidoreductase subunit K.